A 423-amino-acid chain; its full sequence is SH2 domain-containing adapter protein F (423 aa).

Disordered stretches follow at residues 1–87 (MQQE…STTR), 110–208 (DPFD…WEWK), and 225–312 (DLPW…GEWT). Acidic residues predominate over residues 192–203 (EDDERPPEEYDQ). Residue Y201 is modified to Phosphotyrosine. Residues 323–418 (WYHGAISRTD…AEHMSLLYPV (96 aa)) enclose the SH2 domain.

As to quaternary structure, interacts with phosphorylated 'Tyr-720' of PDGFRA via its SH2 domain. In terms of processing, may become phosphorylated upon binding to PDGFRA. In terms of tissue distribution, expressed in skeletal muscle, brain, liver, prostate, testis, ovary, small intestine and colon.

Functionally, adapter protein which may play a role in the regulation of apoptosis in response to PDGF. The sequence is that of SH2 domain-containing adapter protein F from Homo sapiens (Human).